An 875-amino-acid chain; its full sequence is MNYPGHGSPRSSERNGGRGGDGAAWELGSDTEPAFGGSVCRFDHLPVGEPGDDEVPLALLRGEPGLHLAPGAEDHNHHLALDPCLSDDNYDFSSAESGSSLRYYSEGESGGGGSSSSLHPPQQPLVPSNSGGGGAAGGGPGERKRTRPGGAAARHRYEVVTELGPEEVRWFYKEDKKTWKPFIGYDSLRIELAFRTLLQATGARARAQDPDGDHVCGPASPAGPASSSVEDEDEDRVCGFCPRIAGHGREMEELVNIERVCVRGGLYEVDVTQGECYPVYWNQSDKIPVMRGQWFIDGTWQPLEEEESNLIEQEHLSRFRGQQMQESFDIEVSKPIDGKDAIHSFKLSRNHVDWHSVDEVYLYSDATTSKIARTVTQKLGFSKASSSGTRLHRGYVEEATLEDKPSQTTHIVFVVHGIGQKMDQGRIIKNTAMMREAARKIEERHFSNHATHVEFLPVEWRSKLTLDGDTVDSITPDKVRGLRDMLNSSAMDIMYYTSPLYRDELVKGLQQELNRLYSLFCSRNPNFEEKGGKVSIVSHSLGCVITYDIMTGWNPVRLYEQLLQKEEELPDERWMSYEERHLLDELYITKRRLREIEERLHGLKASSMTQTPALKFKVENFFCMGSPLAVFLALRGIRPGNTGSQDHILPREICNRLLNIFHPTDPVAYRLEPLILKHYSNISPVQIHWYNTSNPLPYEYMKPSFLHPAKDPTSISENEGISTIPSPVTSPVLSRRHYGESITNIGKASILGAASIGKGLGGMLFSRFGRSSASQPSETSRDSIEDEKKPVASPPMTTVATQTLPHSSSGFLDSALELDHRIDFELREGLVESRYWSAVTSHTAYWSSLDVALFLLTFMYKHEHDNNVKPSLDPV.

Disordered regions lie at residues 1-30, 101-153, and 206-231; these read MNYP…LGSD, LRYY…GAAA, and RAQD…SVED. Ser-8 and Ser-11 each carry phosphoserine. Residues 130-140 are compositionally biased toward gly residues; that stretch reads SGGGGAAGGGP. Low complexity predominate over residues 217-228; the sequence is GPASPAGPASSS. The active site involves Ser-540. The region spanning 614–861 is the DDHD domain; it reads LKFKVENFFC…ALFLLTFMYK (248 aa). Ser-726 carries the post-translational modification Phosphoserine. The interval 770 to 804 is disordered; that stretch reads RSSASQPSETSRDSIEDEKKPVASPPMTTVATQTL. Residues 779–790 show a composition bias toward basic and acidic residues; sequence TSRDSIEDEKKP. Residues 795–804 are compositionally biased toward polar residues; sequence PMTTVATQTL.

It belongs to the PA-PLA1 family. As to quaternary structure, forms homooligomers and, to a much smaller extent, heterooligomers with DDHD2. Interacts with SEC23A and SEC24C. Expressed in mature testis.

It is found in the cytoplasm. It carries out the reaction a 1,2-diacyl-sn-glycero-3-phosphate + H2O = a 2-acyl-sn-glycerol 3-phosphate + a fatty acid + H(+). It catalyses the reaction a 1,2-diacyl-sn-glycero-3-phospho-(1D-myo-inositol) + H2O = a 2-acyl-sn-glycero-3-phospho-D-myo-inositol + a fatty acid + H(+). The enzyme catalyses 1-octadecanoyl-2-(5Z,8Z,11Z,14Z-eicosatetraenoyl)-sn-glycero-3-phospho-(1D-myo-inositol) + H2O = 2-(5Z,8Z,11Z,14Z-eicosatetraenoyl)-sn-glycero-3-phospho-(1D-myo-inositol) + octadecanoate + H(+). The catalysed reaction is a 1-acyl-2-(5Z,8Z,11Z,14Z-eicosatetraenoyl)-sn-glycero-3-phospho-(1D-myo-inositol) + H2O = 2-(5Z,8Z,11Z,14Z-eicosatetraenoyl)-sn-glycero-3-phospho-(1D-myo-inositol) + a fatty acid + H(+). It carries out the reaction 1,2-dihexadecanoyl-sn-glycero-3-phospho-(1D-myo-inositol) + H2O = 2-hexadecanoyl-sn-glycero-3-phospho-(1D-myo-inositol) + hexadecanoate + H(+). It catalyses the reaction 1,2-di-(9Z-octadecenoyl)-sn-glycero-3-phosphate + H2O = 2-(9Z-octadecenoyl)-sn-glycero-3-phosphate + (9Z)-octadecenoate + H(+). The enzyme catalyses a 1-acyl-2-(5Z,8Z,11Z,14Z)-eicosatetraenoyl-sn-glycero-3-phosphate + H2O = 2-(5Z,8Z,11Z,14Z-eicosatetraenoyl)-sn-glycero-3-phosphate + a fatty acid + H(+). The catalysed reaction is 1-hexadecanoyl-2-(9Z-octadecenoyl)-sn-glycero-3-phosphate + H2O = 2-(9Z-octadecenoyl)-sn-glycero-3-phosphate + hexadecanoate + H(+). It carries out the reaction 1-hexadecanoyl-2-(9Z-octadecenoyl)-sn-glycero-3-phospho-L-serine + H2O = 2-(9Z-octadecenoyl)-sn-glycero-3-phospho-L-serine + hexadecanoate + H(+). It catalyses the reaction 1,2-di-(5Z,8Z,11Z,14Z)-eicosatetraenoyl-sn-glycero-3-phosphate + H2O = 2-(5Z,8Z,11Z,14Z-eicosatetraenoyl)-sn-glycero-3-phosphate + (5Z,8Z,11Z,14Z)-eicosatetraenoate + H(+). The enzyme catalyses 1-octadecanoyl-2-(5Z,8Z,11Z,14Z-eicosatetraenoyl)-sn-glycero-3-phosphate + H2O = 2-(5Z,8Z,11Z,14Z-eicosatetraenoyl)-sn-glycero-3-phosphate + octadecanoate + H(+). The catalysed reaction is a 1,2-diacyl-sn-glycero-3-phosphocholine + H2O = a 2-acyl-sn-glycero-3-phosphocholine + a fatty acid + H(+). It carries out the reaction a 1,2-diacyl-sn-glycero-3-phosphoethanolamine + H2O = a 2-acyl-sn-glycero-3-phosphoethanolamine + a fatty acid + H(+). It catalyses the reaction a 1,2-diacyl-sn-glycero-3-phospho-L-serine + H2O = a 2-acyl-sn-glycero-3-phospho-L-serine + a fatty acid + H(+). The enzyme catalyses a 1,2-diacyl-sn-glycero-3-phospho-(1'-sn-glycerol) + H2O = 2-acyl-sn-glycero-3-phospho-(1'-sn-glycerol) + a fatty acid + H(+). The catalysed reaction is 1-hexadecanoyl-2-(9Z-octadecenoyl)-sn-glycero-3-phospho-(1'-sn-glycerol) + H2O = 2-(9Z-octadecenoyl)-sn-glycero-3-phospho-(1'-sn-glycerol) + hexadecanoate + H(+). It carries out the reaction 1-acyl-2-(5Z,8Z,11Z,14Z-eicosatetraenoyl)-sn-glycero-3-phosphocholine + H2O = 2-(5Z,8Z,11Z,14Z)-eicosatetraenoyl-sn-glycero-3-phosphocholine + a fatty acid + H(+). It catalyses the reaction 1-acyl-2-(5Z,8Z,11Z,14Z)-eicosatetraenoyl-sn-glycero-3-phosphoethanolamine + H2O = 2-(5Z,8Z,11Z,14Z)-eicosatetraenoyl-sn-glycero-3-phosphoethanolamine + a fatty acid + H(+). The enzyme catalyses 1-(9Z-octadecenoyl)-2-(7Z,10Z,13Z,16Z,19Z-docosapentaenoyl)-sn-glycero-3-phospho-1D-myo-inositol + H2O = 2-(7Z,10Z,13Z,16Z,19Z-docosapentaenoyl)-sn-glycero-3-phospho-1D-myo-inositol + (9Z)-octadecenoate + H(+). The catalysed reaction is 1-(9Z-octadecenoyl)-2-(5Z,8Z,11Z,14Z-eicosatetraenoyl)-sn-glycero-3-phospho-1D-myo-inositol + H2O = 2-(5Z,8Z,11Z,14Z-eicosatetraenoyl)-sn-glycero-3-phospho-(1D-myo-inositol) + (9Z)-octadecenoate + H(+). It carries out the reaction 1,2-di-(9Z-octadecenoyl)-sn-glycero-3-phospho-1D-myo-inositol + H2O = 2-(9Z-octadecenoyl)-sn-glycero-3-phospho-1D-myo-inositol + (9Z)-octadecenoate + H(+). It catalyses the reaction 1-(9Z-octadecenoyl)-2-(8Z,11Z,14Z-eicosatrienoyl)-sn-glycero-3-phospho-1D-myo-inositol + H2O = 2-(8Z,11Z,14Z-eicosatrienoyl)-sn-glycero-3-phospho-1D-myo-inositol + (9Z)-octadecenoate + H(+). The enzyme catalyses 1,2-di-(9Z-octadecenoyl)-sn-glycero-3-phosphocholine + H2O = (9Z-octadecenoyl)-sn-glycero-3-phosphocholine + (9Z)-octadecenoate + H(+). It functions in the pathway phospholipid metabolism; phosphatidylinositol metabolism. Its function is as follows. Phospholipase A1 (PLA1) that hydrolyzes ester bonds at the sn-1 position of glycerophospholipids producing a free fatty acid and a lysophospholipid. Prefers phosphatidate (1,2-diacyl-sn-glycero-3-phosphate, PA) as substrate in vitro, but can efficiently hydrolyze phosphatidylinositol (1,2-diacyl-sn-glycero-3-phospho-(1D-myo-inositol), PI), as well as a range of other glycerophospholipid substrates such as phosphatidylcholine (1,2-diacyl-sn-glycero-3-phosphocholine, PC), phosphatidylethanolamine (1,2-diacyl-sn-glycero-3-phosphoethanolamine, PE), phosphatidylserine (1,2-diacyl-sn-glycero-3-phospho-L-serine, PS) and phosphatidylglycerol (1,2-diacyl-sn-glycero-3-phospho-(1'-sn-glycerol), PG). Involved in the regulation of the endogenous content of polyunsaturated PI and PS lipids in the nervous system. Changes in these lipids extend to downstream metabolic products like PI phosphates PIP and PIP2, which play fundamental roles in cell biology. Regulates mitochondrial morphology. These dynamic changes may be due to PA hydrolysis at the mitochondrial surface. May play a regulatory role in spermatogenesis or sperm function. This chain is Phospholipase DDHD1 (DDHD1), found in Bos taurus (Bovine).